Reading from the N-terminus, the 681-residue chain is Potassium-transporting ATPase ATP-binding subunit (681 aa).

4 helical membrane-spanning segments follow: residues 30–50, 59–79, 216–236, and 255–275; these read LLVY…FFGI, LAIA…EAIA, ILLV…LPFT, and IALL…SIGI. Asp306 acts as the 4-aspartylphosphate intermediate in catalysis. ATP contacts are provided by residues Asp343, Glu347, 376 to 383, and Lys394; that span reads FTATTRMS. Residues Asp517 and Asp521 each coordinate Mg(2+). The next 3 helical transmembrane spans lie at 587–607, 615–635, and 661–681; these read FAII…LNLM, AILS…PLSL, and LIAP…LGIV.

This sequence belongs to the cation transport ATPase (P-type) (TC 3.A.3) family. Type IA subfamily. The system is composed of three essential subunits: KdpA, KdpB and KdpC.

The protein resides in the cell membrane. The catalysed reaction is K(+)(out) + ATP + H2O = K(+)(in) + ADP + phosphate + H(+). Its function is as follows. Part of the high-affinity ATP-driven potassium transport (or Kdp) system, which catalyzes the hydrolysis of ATP coupled with the electrogenic transport of potassium into the cytoplasm. This subunit is responsible for energy coupling to the transport system and for the release of the potassium ions to the cytoplasm. This chain is Potassium-transporting ATPase ATP-binding subunit, found in Listeria monocytogenes serotype 4b (strain CLIP80459).